The following is a 126-amino-acid chain: Holo-[acyl-carrier-protein] synthase (126 aa).

2 residues coordinate Mg(2+): aspartate 8 and glutamate 57.

Belongs to the P-Pant transferase superfamily. AcpS family. Requires Mg(2+) as cofactor.

It is found in the cytoplasm. It carries out the reaction apo-[ACP] + CoA = holo-[ACP] + adenosine 3',5'-bisphosphate + H(+). Functionally, transfers the 4'-phosphopantetheine moiety from coenzyme A to a Ser of acyl-carrier-protein. This chain is Holo-[acyl-carrier-protein] synthase, found in Geobacter sulfurreducens (strain ATCC 51573 / DSM 12127 / PCA).